The chain runs to 130 residues: RutC family protein slr0709 (130 aa).

It belongs to the RutC family.

The polypeptide is RutC family protein slr0709 (Synechocystis sp. (strain ATCC 27184 / PCC 6803 / Kazusa)).